Reading from the N-terminus, the 317-residue chain is Methionyl-tRNA formyltransferase (317 aa).

110 to 113 (SLLP) provides a ligand contact to (6S)-5,6,7,8-tetrahydrofolate.

Belongs to the Fmt family.

The enzyme catalyses L-methionyl-tRNA(fMet) + (6R)-10-formyltetrahydrofolate = N-formyl-L-methionyl-tRNA(fMet) + (6S)-5,6,7,8-tetrahydrofolate + H(+). Its function is as follows. Attaches a formyl group to the free amino group of methionyl-tRNA(fMet). The formyl group appears to play a dual role in the initiator identity of N-formylmethionyl-tRNA by promoting its recognition by IF2 and preventing the misappropriation of this tRNA by the elongation apparatus. The chain is Methionyl-tRNA formyltransferase from Bacillus pumilus (strain SAFR-032).